A 338-amino-acid chain; its full sequence is D-xylulose reductase (338 aa).

The Zn(2+) site is built by Cys-40, His-65, and Glu-151.

The protein belongs to the zinc-containing alcohol dehydrogenase family. Homotetramer. The cofactor is Zn(2+).

The catalysed reaction is xylitol + NAD(+) = D-xylulose + NADH + H(+). This Morganella morganii (Proteus morganii) protein is D-xylulose reductase.